The chain runs to 116 residues: NADH-ubiquinone oxidoreductase chain 3 (116 aa).

Helical transmembrane passes span 3-23 (LFAT…LVSF), 56-76 (FFLV…LLPL), and 88-108 (TLFW…YEWA).

This sequence belongs to the complex I subunit 3 family. In terms of assembly, core subunit of respiratory chain NADH dehydrogenase (Complex I) which is composed of 45 different subunits.

The protein localises to the mitochondrion inner membrane. It catalyses the reaction a ubiquinone + NADH + 5 H(+)(in) = a ubiquinol + NAD(+) + 4 H(+)(out). Core subunit of the mitochondrial membrane respiratory chain NADH dehydrogenase (Complex I) which catalyzes electron transfer from NADH through the respiratory chain, using ubiquinone as an electron acceptor. Essential for the catalytic activity of complex I. The sequence is that of NADH-ubiquinone oxidoreductase chain 3 (mt-nd3) from Danio rerio (Zebrafish).